A 103-amino-acid chain; its full sequence is Thioredoxin-1 (103 aa).

The 102-residue stretch at 2 to 103 (VTQFKTASEF…AIKQAIAANA (102 aa)) folds into the Thioredoxin domain. Active-site nucleophile residues include C30 and C33. C30 and C33 are oxidised to a cystine. Residues K54, K66, and K96 each participate in a glycyl lysine isopeptide (Lys-Gly) (interchain with G-Cter in ubiquitin) cross-link.

It belongs to the thioredoxin family. In terms of assembly, monomer. Part of the heterodimeric LMA1 complex together with the proteinase inhibitor PBI2. Most of the thioredoxin of yeast is in this complex rather than the well-studied monomer. LMA1 binds to the ATPase SEC18. Reversible disulfide bond formation between Cys-30 and Cys-33, reverted by thioredoxin reductase TRR1 using NADPH as hydrogen donor.

The protein localises to the nucleus. The protein resides in the cytoplasm. It is found in the golgi apparatus membrane. It localises to the mitochondrion intermembrane space. Functionally, participates as a hydrogen donor in redox reactions through the reversible oxidation of its active center dithiol to a disulfide, accompanied by the transfer of 2 electrons and 2 protons. It is involved in many cellular processes, including deoxyribonucleotide synthesis, repair of oxidatively damaged proteins, protein folding, sulfur metabolism, and redox homeostasis. Thioredoxin-dependent enzymes include phosphoadenosine-phosphosulfate reductase MET16, alkyl-hydroperoxide reductase DOT5, thioredoxin peroxidases TSA1 and TSA2, alkyl hydroperoxide reductase AHP1, and peroxiredoxin HYR1. Thioredoxin is also involved in protection against reducing stress. As part of the LMA1 complex, it is involved in the facilitation of vesicle fusion such as homotypic vacuole and ER-derived COPII vesicle fusion with the Golgi. This activity does not require the redox mechanism. This chain is Thioredoxin-1 (TRX1), found in Saccharomyces cerevisiae (strain ATCC 204508 / S288c) (Baker's yeast).